Consider the following 162-residue polypeptide: MSFLDRTARAFLLTELVQGLALTLRYMFKPKVTINYPYEKGPLSVRFRGEHALRRYPNGEERCIACKLCEAICPAQAITIEPEPRDDGSRRARRYDLDMTKCIYCGLCQEACPVDAIVEGPNFEYATETRAELMYNKSKLLANGDRWEAELAFRIAADAPYR.

4Fe-4S ferredoxin-type domains lie at 53 to 83 (LRRY…IEPE) and 93 to 122 (RRYD…EGPN). 8 residues coordinate [4Fe-4S] cluster: Cys-63, Cys-66, Cys-69, Cys-73, Cys-102, Cys-105, Cys-108, and Cys-112.

This sequence belongs to the complex I 23 kDa subunit family. In terms of assembly, NDH-1 is composed of 14 different subunits. Subunits NuoA, H, J, K, L, M, N constitute the membrane sector of the complex. [4Fe-4S] cluster is required as a cofactor.

Its subcellular location is the cell inner membrane. The catalysed reaction is a quinone + NADH + 5 H(+)(in) = a quinol + NAD(+) + 4 H(+)(out). Its function is as follows. NDH-1 shuttles electrons from NADH, via FMN and iron-sulfur (Fe-S) centers, to quinones in the respiratory chain. The immediate electron acceptor for the enzyme in this species is believed to be ubiquinone. Couples the redox reaction to proton translocation (for every two electrons transferred, four hydrogen ions are translocated across the cytoplasmic membrane), and thus conserves the redox energy in a proton gradient. The polypeptide is NADH-quinone oxidoreductase subunit I (Paramagnetospirillum magneticum (strain ATCC 700264 / AMB-1) (Magnetospirillum magneticum)).